The sequence spans 420 residues: NEDD8-specific protease 1 (420 aa).

Low complexity predominate over residues Lys-257–Ser-281. The disordered stretch occupies residues Lys-257–Phe-420. The span at Asn-286 to His-296 shows a compositional bias: basic and acidic residues. Basic residues predominate over residues Glu-297 to His-310. Over residues Ser-311–Gln-324 the composition is skewed to basic and acidic residues. 3 positions are modified to phosphoserine: Ser-329, Ser-340, and Ser-351. Residues Asn-355 to Glu-377 are compositionally biased toward basic and acidic residues.

It belongs to the peptidase C48 family. Interacts with csn1. It is, however, not a component of the signalosome.

It is found in the cytoplasm. Protease that catalyzes two essential functions in the NEDD8 pathway: processing of full-length NEDD8 to its mature form and deconjugation of NEDD8 from targeted proteins such as the pcu1, pcu2 and pcu4 cullins and other proteins. In Schizosaccharomyces pombe (strain 972 / ATCC 24843) (Fission yeast), this protein is NEDD8-specific protease 1 (nep1).